The primary structure comprises 529 residues: MLLAVLYCLLWSFQTSAGHFPRACVSSKNLMEKECCPPWSGDRSPCGQLSGRGSCQNILLSNAPLGPQFPFTGVDDRESWPSVFYNRTCQCSGNFMGFNCGNCKFGFWGPNCTERRLLVRRNIFDLSAPEKDKFFAYLTLAKHTISSDYVIPIGTYGQMKNGSTPMFNDINIYDLFVWMHYYVSMDALLGGSEIWRDIDFAHEAPAFLPWHRLFLLRWEQEIQKLTGDENFTIPYWDWRDAEKCDICTDEYMGGQHPTNPNLLSPASFFSSWQIVCSRLEEYNSHQSLCNGTPEGPLRRNPGNHDKSRTPRLPSSADVEFCLSLTQYESGSMDKAANFSFRNTLEGFASPLTGIADASQSSMHNALHIYMNGTMSQVQGSANDPIFLLHHAFVDSIFEQWLRRHRPLQEVYPEANAPIGHNRESYMVPFIPLYRNGDFFISSKDLGYDYSYLQDSDPDSFQDYIKSYLEQASRIWSWLLGAAMVGAVLTALLAGLVSLLCRHKRKQLPEEKQPLLMEKEDYHSLYQSHL.

Positions 1–18 (MLLAVLYCLLWSFQTSAG) are cleaved as a signal peptide. The Lumenal, melanosome segment spans residues 19–476 (HFPRACVSSK…YLEQASRIWS (458 aa)). 3 N-linked (GlcNAc...) asparagine glycosylation sites follow: asparagine 86, asparagine 111, and asparagine 161. 3 residues coordinate Cu cation: histidine 180, histidine 202, and histidine 211. Residue asparagine 230 is glycosylated (N-linked (GlcNAc...) asparagine). The disordered stretch occupies residues 287 to 313 (SLCNGTPEGPLRRNPGNHDKSRTPRLP). The N-linked (GlcNAc...) asparagine glycan is linked to asparagine 337. Positions 363 and 367 each coordinate Cu cation. The N-linked (GlcNAc...) asparagine glycan is linked to asparagine 371. Histidine 390 contributes to the Cu cation binding site. Residues 477–497 (WLLGAAMVGAVLTALLAGLVS) traverse the membrane as a helical segment. Over 498-529 (LLCRHKRKQLPEEKQPLLMEKEDYHSLYQSHL) the chain is Cytoplasmic.

The protein belongs to the tyrosinase family. As to quaternary structure, forms an OPN3-dependent complex with DCT in response to blue light in melanocytes. It depends on Cu(2+) as a cofactor. In terms of processing, glycosylated.

It is found in the melanosome membrane. The protein localises to the melanosome. The enzyme catalyses 2 L-dopa + O2 = 2 L-dopaquinone + 2 H2O. The catalysed reaction is L-tyrosine + O2 = L-dopaquinone + H2O. It catalyses the reaction 2 5,6-dihydroxyindole-2-carboxylate + O2 = 2 indole-5,6-quinone-2-carboxylate + 2 H2O. Functionally, this is a copper-containing oxidase that functions in the formation of pigments such as melanins and other polyphenolic compounds. Catalyzes the initial and rate limiting step in the cascade of reactions leading to melanin production from tyrosine. In addition to hydroxylating tyrosine to DOPA (3,4-dihydroxyphenylalanine), also catalyzes the oxidation of DOPA to DOPA-quinone, and possibly the oxidation of DHI (5,6-dihydroxyindole) to indole-5,6 quinone. The sequence is that of Tyrosinase from Homo sapiens (Human).